The chain runs to 430 residues: Glutamate-1-semialdehyde 2,1-aminomutase (430 aa).

N6-(pyridoxal phosphate)lysine is present on lysine 267.

The protein belongs to the class-III pyridoxal-phosphate-dependent aminotransferase family. HemL subfamily. Homodimer. Pyridoxal 5'-phosphate is required as a cofactor.

The protein localises to the cytoplasm. The catalysed reaction is (S)-4-amino-5-oxopentanoate = 5-aminolevulinate. The protein operates within porphyrin-containing compound metabolism; protoporphyrin-IX biosynthesis; 5-aminolevulinate from L-glutamyl-tRNA(Glu): step 2/2. The polypeptide is Glutamate-1-semialdehyde 2,1-aminomutase (Anaeromyxobacter dehalogenans (strain 2CP-C)).